The following is a 572-amino-acid chain: Hemolysin-1 (572 aa).

Bacterial hemolysins are exotoxins that attack blood cell membranes and cause cell rupture by mechanisms not clearly defined. This is Hemolysin-1 (ash1) from Aeromonas salmonicida.